Consider the following 96-residue polypeptide: Co-chaperonin GroES (96 aa).

Belongs to the GroES chaperonin family. In terms of assembly, heptamer of 7 subunits arranged in a ring. Interacts with the chaperonin GroEL.

The protein resides in the cytoplasm. Functionally, together with the chaperonin GroEL, plays an essential role in assisting protein folding. The GroEL-GroES system forms a nano-cage that allows encapsulation of the non-native substrate proteins and provides a physical environment optimized to promote and accelerate protein folding. GroES binds to the apical surface of the GroEL ring, thereby capping the opening of the GroEL channel. The polypeptide is Co-chaperonin GroES (Trichlorobacter lovleyi (strain ATCC BAA-1151 / DSM 17278 / SZ) (Geobacter lovleyi)).